The sequence spans 154 residues: SsrA-binding protein (154 aa).

Positions 134–154 (QREDLKRRAEDRDTQRELARF) are disordered.

It belongs to the SmpB family.

The protein localises to the cytoplasm. Required for rescue of stalled ribosomes mediated by trans-translation. Binds to transfer-messenger RNA (tmRNA), required for stable association of tmRNA with ribosomes. tmRNA and SmpB together mimic tRNA shape, replacing the anticodon stem-loop with SmpB. tmRNA is encoded by the ssrA gene; the 2 termini fold to resemble tRNA(Ala) and it encodes a 'tag peptide', a short internal open reading frame. During trans-translation Ala-aminoacylated tmRNA acts like a tRNA, entering the A-site of stalled ribosomes, displacing the stalled mRNA. The ribosome then switches to translate the ORF on the tmRNA; the nascent peptide is terminated with the 'tag peptide' encoded by the tmRNA and targeted for degradation. The ribosome is freed to recommence translation, which seems to be the essential function of trans-translation. The chain is SsrA-binding protein from Nitratidesulfovibrio vulgaris (strain ATCC 29579 / DSM 644 / CCUG 34227 / NCIMB 8303 / VKM B-1760 / Hildenborough) (Desulfovibrio vulgaris).